A 399-amino-acid chain; its full sequence is GDP-D-glucose phosphorylase 1 (399 aa).

The active-site Tele-GMP-histidine intermediate is the His237.

The protein belongs to the GDPGP1 family.

It localises to the cytoplasm. It carries out the reaction GDP-alpha-D-glucose + phosphate = alpha-D-glucose 1-phosphate + GDP + H(+). Its function is as follows. Specific and highly efficient GDP-D-glucose phosphorylase regulating the levels of GDP-D-glucose in cells. This is GDP-D-glucose phosphorylase 1 (gdpgp1) from Xenopus laevis (African clawed frog).